A 491-amino-acid polypeptide reads, in one-letter code: Pyruvate carboxylase subunit A (491 aa).

The 445-residue stretch at 1–445 (MFSKILVANR…HTHFVDEYRR (445 aa)) folds into the Biotin carboxylation domain. 3 residues coordinate ATP: lysine 116, glutamate 200, and histidine 235. Residues 120–316 (KKLMKKAGVP…LVKEQIRVAS (197 aa)) form the ATP-grasp domain. Arginine 291 is a catalytic residue.

Heterooctamer of four A and four B subunits. It depends on Mg(2+) as a cofactor. Mn(2+) serves as cofactor. Requires Co(2+) as cofactor.

It carries out the reaction hydrogencarbonate + pyruvate + ATP = oxaloacetate + ADP + phosphate + H(+). Its pathway is carbohydrate biosynthesis; gluconeogenesis. Its activity is regulated as follows. Inhibited by ADP and alpha-ketoglutarate. Functionally, pyruvate carboxylase catalyzes a 2-step reaction, involving the ATP-dependent carboxylation of the covalently attached biotin in the first step and the transfer of the carboxyl group to pyruvate in the second. The sequence is that of Pyruvate carboxylase subunit A (pycA) from Methanothermobacter thermautotrophicus (strain ATCC 29096 / DSM 1053 / JCM 10044 / NBRC 100330 / Delta H) (Methanobacterium thermoautotrophicum).